The chain runs to 456 residues: 26S proteasome non-ATPase regulatory subunit 12 (456 aa).

Position 2 is an N-acetylalanine (Ala2). A Glycyl lysine isopeptide (Lys-Gly) (interchain with G-Cter in SUMO1); alternate cross-link involves residue Lys92. Residue Lys92 forms a Glycyl lysine isopeptide (Lys-Gly) (interchain with G-Cter in SUMO2); alternate linkage. The PCI domain maps to 242–420 (SICKHYRAIY…GVINFQRPKD (179 aa)). Residue Lys368 is modified to N6-acetyllysine.

The protein belongs to the proteasome subunit p55 family. In terms of assembly, component of the 19S proteasome regulatory particle complex. The 26S proteasome consists of a 20S core particle (CP) and two 19S regulatory subunits (RP). The regulatory particle is made of a lid composed of 9 subunits including PSMD12, a base containing 6 ATPases and few additional components. Interacts with ERCC6.

Functionally, component of the 26S proteasome, a multiprotein complex involved in the ATP-dependent degradation of ubiquitinated proteins. This complex plays a key role in the maintenance of protein homeostasis by removing misfolded or damaged proteins, which could impair cellular functions, and by removing proteins whose functions are no longer required. Therefore, the proteasome participates in numerous cellular processes, including cell cycle progression, apoptosis, or DNA damage repair. This chain is 26S proteasome non-ATPase regulatory subunit 12 (Psmd12), found in Mus musculus (Mouse).